Reading from the N-terminus, the 599-residue chain is Elongation factor 4 (599 aa).

Residues Lys2–Gln184 enclose the tr-type G domain. Residues Asp14 to Thr19 and Asn131 to Asp134 each bind GTP.

Belongs to the TRAFAC class translation factor GTPase superfamily. Classic translation factor GTPase family. LepA subfamily.

It is found in the cell inner membrane. It catalyses the reaction GTP + H2O = GDP + phosphate + H(+). In terms of biological role, required for accurate and efficient protein synthesis under certain stress conditions. May act as a fidelity factor of the translation reaction, by catalyzing a one-codon backward translocation of tRNAs on improperly translocated ribosomes. Back-translocation proceeds from a post-translocation (POST) complex to a pre-translocation (PRE) complex, thus giving elongation factor G a second chance to translocate the tRNAs correctly. Binds to ribosomes in a GTP-dependent manner. This is Elongation factor 4 from Salmonella paratyphi A (strain ATCC 9150 / SARB42).